Consider the following 528-residue polypeptide: D-3-phosphoglycerate dehydrogenase (528 aa).

NAD(+) contacts are provided by residues 151–152, Asp171, 230–232, and Asp256; these read RI and AAR. The active site involves Arg232. Glu261 is an active-site residue. Residue His279 is the Proton donor of the active site. 279–282 provides a ligand contact to NAD(+); it reads HLGA. An ACT domain is found at 455-527; that stretch reads NLIIHYVDRP…DAYKLEVVDL (73 aa).

It belongs to the D-isomer specific 2-hydroxyacid dehydrogenase family.

It catalyses the reaction (2R)-3-phosphoglycerate + NAD(+) = 3-phosphooxypyruvate + NADH + H(+). The enzyme catalyses (R)-2-hydroxyglutarate + NAD(+) = 2-oxoglutarate + NADH + H(+). It functions in the pathway amino-acid biosynthesis; L-serine biosynthesis; L-serine from 3-phospho-D-glycerate: step 1/3. Functionally, catalyzes the reversible oxidation of 3-phospho-D-glycerate to 3-phosphonooxypyruvate, the first step of the phosphorylated L-serine biosynthesis pathway. Also catalyzes the reversible oxidation of 2-hydroxyglutarate to 2-oxoglutarate. This chain is D-3-phosphoglycerate dehydrogenase (serA), found in Mycobacterium bovis (strain ATCC BAA-935 / AF2122/97).